A 373-amino-acid chain; its full sequence is tRNA-specific 2-thiouridylase MnmA (373 aa).

Residues 12–19 (GMSGGVDS) and Met38 each bind ATP. An interaction with target base in tRNA region spans residues 98-100 (NPD). Cys103 (nucleophile) is an active-site residue. Cys103 and Cys200 are joined by a disulfide. Residue Gly127 participates in ATP binding. Residues 150–152 (KDQ) form an interaction with tRNA region. Residue Cys200 is the Cysteine persulfide intermediate of the active site. Positions 312–313 (RY) are interaction with tRNA.

Belongs to the MnmA/TRMU family.

Its subcellular location is the cytoplasm. The catalysed reaction is S-sulfanyl-L-cysteinyl-[protein] + uridine(34) in tRNA + AH2 + ATP = 2-thiouridine(34) in tRNA + L-cysteinyl-[protein] + A + AMP + diphosphate + H(+). Catalyzes the 2-thiolation of uridine at the wobble position (U34) of tRNA, leading to the formation of s(2)U34. The chain is tRNA-specific 2-thiouridylase MnmA from Streptococcus pyogenes serotype M18 (strain MGAS8232).